The sequence spans 366 residues: 3-dehydroquinate synthase (366 aa).

Residues 75–80 (DGEEYK), 109–113 (GVVGD), 133–134 (TT), Lys146, Lys155, and 173–176 (TLDT) each bind NAD(+). The Zn(2+) site is built by Glu188, His251, and His268.

It belongs to the sugar phosphate cyclases superfamily. Dehydroquinate synthase family. Co(2+) is required as a cofactor. It depends on Zn(2+) as a cofactor. NAD(+) serves as cofactor.

The protein resides in the cytoplasm. It catalyses the reaction 7-phospho-2-dehydro-3-deoxy-D-arabino-heptonate = 3-dehydroquinate + phosphate. Its pathway is metabolic intermediate biosynthesis; chorismate biosynthesis; chorismate from D-erythrose 4-phosphate and phosphoenolpyruvate: step 2/7. Catalyzes the conversion of 3-deoxy-D-arabino-heptulosonate 7-phosphate (DAHP) to dehydroquinate (DHQ). The sequence is that of 3-dehydroquinate synthase from Nitrosospira multiformis (strain ATCC 25196 / NCIMB 11849 / C 71).